Reading from the N-terminus, the 739-residue chain is Catalase-peroxidase (739 aa).

The tryptophyl-tyrosyl-methioninium (Trp-Tyr) (with M-253) cross-link spans 99 to 227 (WHSAGTYRMG…LAAVQMGLIY (129 aa)). His-100 (proton acceptor) is an active-site residue. Positions 227 to 253 (YVNPEGPDGNPDPVASGRDVRETFARM) form a cross-link, tryptophyl-tyrosyl-methioninium (Tyr-Met) (with W-99). Residue His-268 participates in heme b binding.

Belongs to the peroxidase family. Peroxidase/catalase subfamily. Homodimer or homotetramer. Heme b serves as cofactor. Formation of the three residue Trp-Tyr-Met cross-link is important for the catalase, but not the peroxidase activity of the enzyme.

The catalysed reaction is H2O2 + AH2 = A + 2 H2O. The enzyme catalyses 2 H2O2 = O2 + 2 H2O. In terms of biological role, bifunctional enzyme with both catalase and broad-spectrum peroxidase activity. In Syntrophotalea carbinolica (strain DSM 2380 / NBRC 103641 / GraBd1) (Pelobacter carbinolicus), this protein is Catalase-peroxidase.